A 397-amino-acid chain; its full sequence is Arginine biosynthesis bifunctional protein ArgJ (397 aa).

Positions 147, 173, 184, 270, 392, and 397 each coordinate substrate. The active-site Nucleophile is threonine 184.

The protein belongs to the ArgJ family. As to quaternary structure, heterotetramer of two alpha and two beta chains.

It is found in the cytoplasm. It carries out the reaction N(2)-acetyl-L-ornithine + L-glutamate = N-acetyl-L-glutamate + L-ornithine. It catalyses the reaction L-glutamate + acetyl-CoA = N-acetyl-L-glutamate + CoA + H(+). Its pathway is amino-acid biosynthesis; L-arginine biosynthesis; L-ornithine and N-acetyl-L-glutamate from L-glutamate and N(2)-acetyl-L-ornithine (cyclic): step 1/1. It participates in amino-acid biosynthesis; L-arginine biosynthesis; N(2)-acetyl-L-ornithine from L-glutamate: step 1/4. Its function is as follows. Catalyzes two activities which are involved in the cyclic version of arginine biosynthesis: the synthesis of N-acetylglutamate from glutamate and acetyl-CoA as the acetyl donor, and of ornithine by transacetylation between N(2)-acetylornithine and glutamate. This chain is Arginine biosynthesis bifunctional protein ArgJ, found in Streptococcus mutans serotype c (strain ATCC 700610 / UA159).